The sequence spans 341 residues: Geranylgeranyl pyrophosphate synthase penG (341 aa).

Positions 68, 71, and 100 each coordinate isopentenyl diphosphate. 2 residues coordinate Mg(2+): Asp-107 and Asp-111. A dimethylallyl diphosphate-binding site is contributed by Arg-116. Residue Arg-117 coordinates isopentenyl diphosphate. The dimethylallyl diphosphate site is built by Lys-194, Thr-195, and Gln-228. Asp-231 provides a ligand contact to Mg(2+). Residues Asn-235, Lys-245, and Lys-255 each coordinate dimethylallyl diphosphate.

Belongs to the FPP/GGPP synthase family. Mg(2+) is required as a cofactor.

The enzyme catalyses isopentenyl diphosphate + dimethylallyl diphosphate = (2E)-geranyl diphosphate + diphosphate. It catalyses the reaction isopentenyl diphosphate + (2E)-geranyl diphosphate = (2E,6E)-farnesyl diphosphate + diphosphate. It carries out the reaction isopentenyl diphosphate + (2E,6E)-farnesyl diphosphate = (2E,6E,10E)-geranylgeranyl diphosphate + diphosphate. It functions in the pathway secondary metabolite biosynthesis. Its function is as follows. Geranylgeranyl pyrophosphate synthase; part of the gene cluster that mediates the biosynthesis of the indole diterpenes penitrems. The geranylgeranyl diphosphate (GGPP) synthase penG catalyzes the first step in penitrem biosynthesis via conversion of farnesyl pyrophosphate and isopentyl pyrophosphate into geranylgeranyl pyrophosphate (GGPP). Condensation of indole-3-glycerol phosphate with GGPP by the prenyl transferase penC then forms 3-geranylgeranylindole (3-GGI). Epoxidation by the FAD-dependent monooxygenase penM leads to a epoxidized-GGI that is substrate of the terpene cyclase penB for cyclization to yield paspaline. Paspaline is subsequently converted to 13-desoxypaxilline by the cytochrome P450 monooxygenase penP, the latter being then converted to paxilline by the cytochrome P450 monooxygenase penQ. Paxilline is converted to beta-paxitriol via C-10 ketoreduction by the short-chain dehydrogenase PC-15 which can be monoprenylated at the C-20 by the indole diterpene prenyltransferase penD. A two-step elimination (acetylation and elimination) process performed by the O-acetyltransferase PC-16 and the P.simplicissimum ptmI-ortholog not yet identified in P.crustosum, leads to the production of the prenylated form of penijanthine. The FAD-linked oxidoreductase ptmO then converts the prenylated form of penijanthine into PC-M5 which is in turn transformed into PC-M4 by the aromatic dimethylallyltransferase PC-22. A series of oxidation steps involving 4 cytochrome P450 monooxygenases (PC-21, PC-05, PC-23, PC-20) and a FAD-dependent monooxygenase (PC-14) are required for the transformation of PC-M4 to penitrems A and E. Synthesis of these final products is proposed to proceed via penitrems D and C (PC-21, PC-05, PC-14) and penitrems B and F (PC-21, PC-05, PC-14, PC-23). This chain is Geranylgeranyl pyrophosphate synthase penG, found in Penicillium crustosum (Blue mold fungus).